A 694-amino-acid polypeptide reads, in one-letter code: Probable metal-nicotianamine transporter YSL8 (694 aa).

Transmembrane regions (helical) follow at residues 38-58 (ITVRSLVVSAVLGTFLSFIVM), 62-82 (LTSGIVPSLNVSAGLLAFFLM), 110-130 (CVISCSSIAFSGGFGTYILGM), 154-174 (LGRLIAFLFLVSFVGLFSIVP), 215-235 (ILFKSFVGSFLWSLFQWFYAA), 265-285 (VGVGMICPYIINFSLLIGSVV), 319-339 (VFISIAMIVGDGLFNFFSIVL), 393-413 (IAAAAYVLLAAISVVAIPHIF), 421-441 (VVWAYVVAPLFAFCNAYGTGL), 467-487 (GGVVAGLAACGLMMGIVSTAS), 506-526 (MFVSQVLGTGMGCIISPMVFW), 567-587 (LRFCLAFFLLAIAICALKEVA), 608-628 (FFLGSFFTIDMCVGSLVLFLW), and 643-663 (VASGLICGDGIWSLPSSILSL).

This sequence belongs to the YSL (TC 2.A.67.2) family. In terms of tissue distribution, expressed in root epidermis and exoderm.

Its subcellular location is the membrane. May be involved in the transport of nicotianamine-chelated metals. In Oryza sativa subsp. japonica (Rice), this protein is Probable metal-nicotianamine transporter YSL8 (YSL8).